The sequence spans 89 residues: Small ribosomal subunit protein bS20 (89 aa).

Belongs to the bacterial ribosomal protein bS20 family.

In terms of biological role, binds directly to 16S ribosomal RNA. In Helicobacter pylori (strain P12), this protein is Small ribosomal subunit protein bS20.